The sequence spans 264 residues: Tryptophan synthase alpha chain (264 aa).

Catalysis depends on proton acceptor residues Glu-45 and Asp-56.

This sequence belongs to the TrpA family. Tetramer of two alpha and two beta chains.

It catalyses the reaction (1S,2R)-1-C-(indol-3-yl)glycerol 3-phosphate + L-serine = D-glyceraldehyde 3-phosphate + L-tryptophan + H2O. It functions in the pathway amino-acid biosynthesis; L-tryptophan biosynthesis; L-tryptophan from chorismate: step 5/5. Its function is as follows. The alpha subunit is responsible for the aldol cleavage of indoleglycerol phosphate to indole and glyceraldehyde 3-phosphate. The chain is Tryptophan synthase alpha chain from Leptospira borgpetersenii serovar Hardjo-bovis (strain JB197).